The chain runs to 121 residues: Ribosome-binding factor A (121 aa).

Belongs to the RbfA family. In terms of assembly, monomer. Binds 30S ribosomal subunits, but not 50S ribosomal subunits or 70S ribosomes.

The protein resides in the cytoplasm. In terms of biological role, one of several proteins that assist in the late maturation steps of the functional core of the 30S ribosomal subunit. Associates with free 30S ribosomal subunits (but not with 30S subunits that are part of 70S ribosomes or polysomes). Required for efficient processing of 16S rRNA. May interact with the 5'-terminal helix region of 16S rRNA. This Heliobacterium modesticaldum (strain ATCC 51547 / Ice1) protein is Ribosome-binding factor A.